A 738-amino-acid polypeptide reads, in one-letter code: MKGFKLSCTASNSNRSTPACSPILRKRSRSPTPQNQDGDTMVEKGSDHSSDKSPSTPEQGVQRSCSSQSGRSGGKNSKKSQSWYNVLSPTYKQRNEDFRKLFKQLPDTERLIVDYSCALQRDILLQGRLYLSENWICFYSNIFRWETLLTVRLKDICSMTKEKTARLIPNAIQVCTDSEKHFFTSFGARDRTYMMMFRLWQNALLEKPLCPKELWHFVHQCYGNELGLTSDDEDYVPPDDDFNTMGYCEEIPVEENEVNDSSSKSSIETKPDASPQLPKKSITNSTLTSTGSSEAPVSFDGLPLEEEALEGDGSLEKELAIDNIMGEKIEMIAPVNSPSLDFNDNEDIPTELSDSSDTHDEGEVQAFYEDLSGRQYVNEVFNFSVDKLYDLLFTNSPFQRDFMEQRRFSDIIFHPWKKEENGNQSRVILYTITLTNPLAPKTATVRETQTMYKASQESECYVIDAEVLTHDVPYHDYFYTINRYTLTRVARNKSRLRVSTELRYRKQPWGLVKTFIEKNFWSGLEDYFRHLESELAKTESTYLAEMHRQSPKEKASKTTTVRRRKRPHAHLRVPHLEEVMSPVTTPTDEDVGHRIKHVAGSTQTRHIPEDTPNGFHLQSVSKLLLVISCVICFSLVLLVILNMMLFYKLWMLEYTTQTLTAWQGLRLQERLPQSQTEWAQLLESQQKYHDTELQKWREIIKSSVMLLDQMKDSLINLQNGIRSRDYTSESEEKRNRYH.

The segment at 1–81 (MKGFKLSCTA…SGGKNSKKSQ (81 aa)) is disordered. Positions 8–19 (CTASNSNRSTPA) are enriched in polar residues. A phosphoserine mark is found at Ser28 and Ser30. Residues 41-51 (MVEKGSDHSSD) are compositionally biased toward basic and acidic residues. Low complexity predominate over residues 59-70 (QGVQRSCSSQSG). In terms of domain architecture, GRAM spans 96–163 (EDFRKLFKQL…KDICSMTKEK (68 aa)). Residues 254-301 (EENEVNDSSSKSSIETKPDASPQLPKKSITNSTLTSTGSSEAPVSFDG) form a disordered region. Polar residues predominate over residues 259-268 (NDSSSKSSIE). A Phosphoserine modification is found at Ser274. Residues 281–295 (SITNSTLTSTGSSEA) show a composition bias toward polar residues. One can recognise a VASt domain in the interval 372–543 (SGRQYVNEVF…ELAKTESTYL (172 aa)). Tyr389 bears the Phosphotyrosine mark. A disordered region spans residues 544 to 566 (AEMHRQSPKEKASKTTTVRRRKR). Residues 545-556 (EMHRQSPKEKAS) show a composition bias toward basic and acidic residues. A phosphoserine mark is found at Ser550 and Ser581. Thr584, Thr585, and Thr587 each carry phosphothreonine. The chain crosses the membrane as a helical span at residues 623 to 643 (LLLVISCVICFSLVLLVILNM).

The protein localises to the endoplasmic reticulum membrane. It localises to the cell membrane. Cholesterol transporter that mediates non-vesicular transport of cholesterol from the plasma membrane (PM) to the endoplasmic reticulum (ER). Contains unique domains for binding cholesterol and the PM, thereby serving as a molecular bridge for the transfer of cholesterol from the PM to the ER. Plays a crucial role in cholesterol homeostasis in the adrenal gland and has the unique ability to localize to the PM based on the level of membrane cholesterol. In lipid-poor conditions localizes to the ER membrane and in response to excess cholesterol in the PM is recruited to the endoplasmic reticulum-plasma membrane contact sites (EPCS) which is mediated by the GRAM domain. At the EPCS, the sterol-binding VASt/ASTER domain binds to the cholesterol in the PM and facilitates its transfer from the PM to ER. The sequence is that of Protein Aster-B (GRAMD1B) from Homo sapiens (Human).